The chain runs to 180 residues: ATP-dependent protease subunit HslV (180 aa).

Threonine 5 is a catalytic residue. 3 residues coordinate Na(+): glycine 161, cysteine 164, and threonine 167.

Belongs to the peptidase T1B family. HslV subfamily. A double ring-shaped homohexamer of HslV is capped on each side by a ring-shaped HslU homohexamer. The assembly of the HslU/HslV complex is dependent on binding of ATP.

Its subcellular location is the cytoplasm. It catalyses the reaction ATP-dependent cleavage of peptide bonds with broad specificity.. Allosterically activated by HslU binding. Functionally, protease subunit of a proteasome-like degradation complex believed to be a general protein degrading machinery. The protein is ATP-dependent protease subunit HslV of Campylobacter fetus subsp. fetus (strain 82-40).